A 333-amino-acid chain; its full sequence is Ketoreductase sphI (333 aa).

NADP(+) is bound at residue Tyr-167.

It belongs to the NAD(P)-dependent epimerase/dehydratase family. Dihydroflavonol-4-reductase subfamily.

Ketoreductase; part of the gene cluster that mediates the biosynthesis of sphingofungins, bioactive molecules acting as sphingolipid inhibitors via inhibiting serine palmitoyl transferase (SPT). Does not seem to be involved in any biosynthetic process leading to the production of sphingofungins, but might be connected to a regulation or resistance mechanism. The polypeptide is Ketoreductase sphI (Aspergillus fumigatus (strain CBS 144.89 / FGSC A1163 / CEA10) (Neosartorya fumigata)).